The chain runs to 387 residues: Pepsin A (387 aa).

Positions 1–16 (MKKLLLLLGLVALSEC) are cleaved as a signal peptide. Positions 17–61 (LYKVPLVKKKSLRQNLIENGLLKDFLAKHNVNPASKYFPTEAATE) are cleaved as a propeptide — activation peptide. In terms of domain architecture, Peptidase A1 spans 75 to 384 (YFGTIGIGTP…DRGNNRVGLA (310 aa)). The active site involves Asp93. Cys106 and Cys111 are joined by a disulfide. At Ser129 the chain carries Phosphoserine. Cysteines 267 and 271 form a disulfide. Residue Asp276 is part of the active site. Cys310 and Cys343 are joined by a disulfide.

Belongs to the peptidase A1 family.

It is found in the secreted. The enzyme catalyses Preferential cleavage: hydrophobic, preferably aromatic, residues in P1 and P1' positions. Cleaves 1-Phe-|-Val-2, 4-Gln-|-His-5, 13-Glu-|-Ala-14, 14-Ala-|-Leu-15, 15-Leu-|-Tyr-16, 16-Tyr-|-Leu-17, 23-Gly-|-Phe-24, 24-Phe-|-Phe-25 and 25-Phe-|-Tyr-26 bonds in the B chain of insulin.. Shows particularly broad specificity; although bonds involving phenylalanine and leucine are preferred, many others are also cleaved to some extent. The protein is Pepsin A (PGA) of Suncus murinus (Asian house shrew).